A 358-amino-acid chain; its full sequence is Peptide chain release factor 1 (358 aa).

An N5-methylglutamine modification is found at Gln235.

This sequence belongs to the prokaryotic/mitochondrial release factor family. Methylated by PrmC. Methylation increases the termination efficiency of RF1.

The protein localises to the cytoplasm. Functionally, peptide chain release factor 1 directs the termination of translation in response to the peptide chain termination codons UAG and UAA. This chain is Peptide chain release factor 1, found in Nitrosospira multiformis (strain ATCC 25196 / NCIMB 11849 / C 71).